We begin with the raw amino-acid sequence, 147 residues long: Hemoglobin subunit beta (147 aa).

Valine 2 bears the N-acetylvaline mark. Residues histidine 3–histidine 147 form the Globin domain. Threonine 13 carries the phosphothreonine modification. Serine 45 is subject to Phosphoserine. At lysine 60 the chain carries N6-acetyllysine. Histidine 64 provides a ligand contact to heme b. At lysine 83 the chain carries N6-acetyllysine. Histidine 93 contacts heme b. Cysteine 94 is modified (S-nitrosocysteine). Lysine 145 carries the N6-acetyllysine modification.

Belongs to the globin family. As to quaternary structure, heterotetramer of two alpha chains and two beta chains. Red blood cells.

Functionally, involved in oxygen transport from the lung to the various peripheral tissues. In Tachyglossus aculeatus aculeatus (Southeast Australian short-beaked echidna), this protein is Hemoglobin subunit beta (HBB).